A 311-amino-acid polypeptide reads, in one-letter code: Giardin subunit alpha-8 (311 aa).

Annexin repeat units lie at residues 5 to 73 (RKAY…IRCW), 75 to 146 (NRHE…DRWM), 154 to 223 (NNVK…AAHY), and 227 to 295 (EPSK…SLWR).

This sequence belongs to the annexin family. Giardin subunit alpha subfamily.

The protein resides in the cytoplasm. It localises to the cytoskeleton. Functionally, giardins are involved in parasite attachment to the intestinal mucosa and in the cytoskeletal disassembly and reassembly that marks the transition from infectious trophozoite to transmissible cyst. They may interact with other cytoskeletal proteins such as microtubules in the microribbons or crossbridges, to maintain the integrity of the ventral disk. The polypeptide is Giardin subunit alpha-8 (Giardia intestinalis (Giardia lamblia)).